The following is a 467-amino-acid chain: Putative sulfoquinovose importer (467 aa).

The next 12 helical transmembrane spans lie at 17-37 (IAYG…TLYL), 54-74 (IIFL…GFLL), 88-108 (PFIL…FIAT), 121-141 (ALFM…GAMI), 160-180 (GGAT…QSLF), 185-205 (VGYA…MMLC), 238-258 (LLVL…KLAI), 275-295 (WMGF…PLTV), 303-323 (VYLA…FWGS), 325-345 (SFTF…VNSL), 379-399 (ISAA…GYVP), and 414-434 (LIFI…GFFY).

This sequence belongs to the sodium:galactoside symporter (TC 2.A.2) family.

The protein localises to the cell inner membrane. In terms of biological role, could be involved in sulfoquinovose import. This Escherichia coli (strain K12) protein is Putative sulfoquinovose importer (yihO).